We begin with the raw amino-acid sequence, 224 residues long: MGRGRYPARLYVTAPPPEIAARYYRSWPAKELYHTPEHFPPVSAEGLFGYNAPLTLEFGCATGEYLCALAAAQPSSCFVGIDIVAKPLYRAVERAVAGNLSNILFIHADARLIYQRIPTAALHSIILHFPPPLLRNRQRNQLLVSPQLLECAARTLVPGGYLSFLTDHPALFALMQELLPAFPALRATPASVEELAVFESHYHRRWAARGRTISGLRIERVMED.

Residues Glu57, Asp82, and Asp109 each contribute to the S-adenosyl-L-methionine site. Position 167 (Asp167) interacts with substrate.

Belongs to the class I-like SAM-binding methyltransferase superfamily. TrmB family.

It catalyses the reaction guanosine(46) in tRNA + S-adenosyl-L-methionine = N(7)-methylguanosine(46) in tRNA + S-adenosyl-L-homocysteine. It functions in the pathway tRNA modification; N(7)-methylguanine-tRNA biosynthesis. Its function is as follows. Catalyzes the formation of N(7)-methylguanine at position 46 (m7G46) in tRNA. The polypeptide is tRNA (guanine-N(7)-)-methyltransferase (Chloroflexus aurantiacus (strain ATCC 29366 / DSM 635 / J-10-fl)).